A 308-amino-acid polypeptide reads, in one-letter code: Small ribosomal subunit protein uS2 (308 aa).

Ser-2 is subject to N-acetylserine. Laminin-binding stretches follow at residues 161-180 and 205-229; these read IPCN…MLAR and RDPE…EFQG. [DE]-W-[ST] repeat units follow at residues 230–232, 245–247, 279–281, 288–290, and 306–308; these read EWT and DWS. The interval 242–308 is laminin-binding; sequence EVADWSEGVQ…DWGGATADWS (67 aa). The disordered stretch occupies residues 262-308; sequence AGIEAPGKPAPAEVYAEDWSAQPATEDWSAAPTAQAGDWGGATADWS.

The protein belongs to the universal ribosomal protein uS2 family. As to quaternary structure, monomer (37LRP) and homodimer (67LR). Component of the small ribosomal subunit. Mature ribosomes consist of a small (40S) and a large (60S) subunit. The 40S subunit contains about 33 different proteins and 1 molecule of RNA (18S). The 60S subunit contains about 49 different proteins and 3 molecules of RNA (28S, 5.8S and 5S). Interacts with rps21. Interacts with several laminins including at least lamb1. Interacts with mdk. Post-translationally, acylated. Acylation may be a prerequisite for conversion of the monomeric 37 kDa laminin receptor precursor (37LRP) to the mature dimeric 67 kDa laminin receptor (67LR), and may provide a mechanism for membrane association. In terms of processing, cleaved by stromelysin-3 (ST3) at the cell surface. Cleavage by stromelysin-3 may be a mechanism to alter cell-extracellular matrix interactions.

It is found in the cell membrane. The protein localises to the cytoplasm. Its subcellular location is the nucleus. Functionally, required for the assembly and/or stability of the 40S ribosomal subunit. Required for the processing of the 20S rRNA-precursor to mature 18S rRNA in a late step of the maturation of 40S ribosomal subunits. Also functions as a cell surface receptor for laminin. Plays a role in cell adhesion to the basement membrane and in the consequent activation of signaling transduction pathways. May play a role in cell fate determination and tissue morphogenesis. This Danio rerio (Zebrafish) protein is Small ribosomal subunit protein uS2 (rpsa).